The chain runs to 212 residues: Histone H1.2 (212 aa).

Low complexity predominate over residues 1–17; sequence MSEAAPAAPAAAPPAEK. The segment at 1 to 41 is disordered; it reads MSEAAPAAPAAAPPAEKAPAKKKAAKKPAGVRRKASGPPVS. N-acetylserine is present on Ser2. At Ser2 the chain carries Phosphoserine. Residue Lys17 is modified to N6-acetyllysine. Basic residues predominate over residues 20 to 35; that stretch reads AKKKAAKKPAGVRRKA. Residues Lys23, Lys26, and Lys27 each carry the N6-(2-hydroxyisobutyryl)lysine modification. N6-(beta-hydroxybutyryl)lysine; alternate is present on Lys34. At Lys34 the chain carries N6-crotonyllysine; alternate. An N6-methyllysine; alternate modification is found at Lys34. The region spanning 36 to 109 is the H15 domain; that stretch reads SGPPVSELIT…GASGSFKLNK (74 aa). Lys46 bears the N6-(2-hydroxyisobutyryl)lysine mark. Lys52 bears the N6-(beta-hydroxybutyryl)lysine; alternate mark. Lys52 bears the N6-(2-hydroxyisobutyryl)lysine; alternate mark. Arg54 bears the Citrulline mark. Position 63 is an N6-(2-hydroxyisobutyryl)lysine (Lys63). An N6-(beta-hydroxybutyryl)lysine; alternate modification is found at Lys64. Residue Lys64 is modified to N6-crotonyllysine; alternate. The residue at position 64 (Lys64) is an N6-(2-hydroxyisobutyryl)lysine; alternate. 2 positions are modified to N6-(2-hydroxyisobutyryl)lysine: Lys75 and Lys81. N6-(beta-hydroxybutyryl)lysine; alternate occurs at positions 85 and 90. N6-crotonyllysine; alternate is present on residues Lys85, Lys90, and Lys97. N6-(2-hydroxyisobutyryl)lysine; alternate is present on residues Lys85, Lys90, and Lys97. Lys97 is subject to N6-succinyllysine; alternate. The disordered stretch occupies residues 98 to 212; the sequence is GTGASGSFKL…KAKKVAAKKK (115 aa). Ser104 is modified (phosphoserine; by PKC). An N6-(beta-hydroxybutyryl)lysine modification is found at Lys106. N6-(2-hydroxyisobutyryl)lysine is present on residues Lys110, Lys117, Lys121, Lys129, and Lys136. Over residues 121–148 the composition is skewed to low complexity; the sequence is KKAGAAKAKKPAGAAKKPKKATGAATPK. The residue at position 146 (Thr146) is a Phosphothreonine. Lys148 carries the post-translational modification N6-(2-hydroxyisobutyryl)lysine. Positions 149–160 are enriched in basic residues; that stretch reads KAAKKTPKKAKK. N6-crotonyllysine; alternate occurs at positions 159 and 168. N6-(2-hydroxyisobutyryl)lysine; alternate is present on residues Lys159 and Lys168. Basic residues predominate over residues 169-212; sequence KVAKSPKKAKVTKPKKVKSASKAVKPKAAKPKVAKAKKVAAKKK. Lys186 bears the N6-methyllysine; by EHMT1 and EHMT2 mark. Residue Ser187 is modified to ADP-ribosylserine. Residue Lys212 is modified to N6-(2-hydroxyisobutyryl)lysine.

Belongs to the histone H1/H5 family. In terms of assembly, interacts with TSC22D1 isoform 2. In terms of processing, H1 histones are progressively phosphorylated during the cell cycle, becoming maximally phosphorylated during late G2 phase and M phase, and being dephosphorylated sharply thereafter. Post-translationally, crotonylation (Kcr) is specifically present in male germ cells and marks testis-specific genes in post-meiotic cells, including X-linked genes that escape sex chromosome inactivation in haploid cells. Crotonylation marks active promoters and enhancers and confers resistance to transcriptional repressors. It is also associated with post-meiotically activated genes on autosomes. ADP-ribosylated on Ser-187 in response to DNA damage. In terms of processing, citrullination at Arg-54 (H1R54ci) by PADI4 takes place within the DNA-binding site of H1 and results in its displacement from chromatin and global chromatin decondensation, thereby promoting pluripotency and stem cell maintenance. Post-translationally, hydroxybutyrylation of histones is induced by starvation.

The protein resides in the nucleus. It is found in the chromosome. Its function is as follows. Histone H1 protein binds to linker DNA between nucleosomes forming the macromolecular structure known as the chromatin fiber. Histones H1 are necessary for the condensation of nucleosome chains into higher-order structured fibers. Also acts as a regulator of individual gene transcription through chromatin remodeling, nucleosome spacing and DNA methylation. This Mus musculus (Mouse) protein is Histone H1.2.